The sequence spans 528 residues: Probable methylmalonate-semialdehyde/malonate-semialdehyde dehydrogenase [acylating], mitochondrial (528 aa).

A mitochondrion-targeting transit peptide spans 1–26 (MLSFKFAKSASKVIGNRNFHSSSASL). NAD(+) is bound by residues Phe175, Lys199, Glu202, and Arg203. Cys307 functions as the Nucleophile in the catalytic mechanism. An NAD(+)-binding site is contributed by Glu408.

It belongs to the aldehyde dehydrogenase family. Homotetramer.

It is found in the mitochondrion. It catalyses the reaction 2-methyl-3-oxopropanoate + NAD(+) + CoA + H2O = propanoyl-CoA + hydrogencarbonate + NADH + H(+). The catalysed reaction is 3-oxopropanoate + NAD(+) + CoA + H2O = hydrogencarbonate + acetyl-CoA + NADH + H(+). Its function is as follows. Probable malonate and methylmalonate semialdehyde dehydrogenase involved in the catabolism of valine, thymine, and compounds catabolized by way of beta-alanine, including uracil and cytidine. In Dictyostelium discoideum (Social amoeba), this protein is Probable methylmalonate-semialdehyde/malonate-semialdehyde dehydrogenase [acylating], mitochondrial (mmsdh).